We begin with the raw amino-acid sequence, 248 residues long: Uridylate kinase (248 aa).

13-16 (KLSG) serves as a coordination point for ATP. A UMP-binding site is contributed by glycine 55. Residues glycine 56 and arginine 60 each coordinate ATP. Residues aspartate 75 and 136-143 (TGNPYFTT) contribute to the UMP site. Positions 163, 169, and 172 each coordinate ATP.

Belongs to the UMP kinase family. Homohexamer.

The protein localises to the cytoplasm. It catalyses the reaction UMP + ATP = UDP + ADP. Its pathway is pyrimidine metabolism; CTP biosynthesis via de novo pathway; UDP from UMP (UMPK route): step 1/1. Inhibited by UTP. Functionally, catalyzes the reversible phosphorylation of UMP to UDP. The chain is Uridylate kinase from Leptospira interrogans serogroup Icterohaemorrhagiae serovar copenhageni (strain Fiocruz L1-130).